The sequence spans 349 residues: Phenylalanine--tRNA ligase alpha subunit (349 aa).

E259 contributes to the Mg(2+) binding site.

Belongs to the class-II aminoacyl-tRNA synthetase family. Phe-tRNA synthetase alpha subunit type 1 subfamily. Tetramer of two alpha and two beta subunits. Requires Mg(2+) as cofactor.

The protein resides in the cytoplasm. The catalysed reaction is tRNA(Phe) + L-phenylalanine + ATP = L-phenylalanyl-tRNA(Phe) + AMP + diphosphate + H(+). In Lactobacillus gasseri (strain ATCC 33323 / DSM 20243 / BCRC 14619 / CIP 102991 / JCM 1131 / KCTC 3163 / NCIMB 11718 / NCTC 13722 / AM63), this protein is Phenylalanine--tRNA ligase alpha subunit.